The sequence spans 137 residues: Structural protein A137R (137 aa).

The protein belongs to the asfivirus A137R family. Interacts with host TBK1.

The protein resides in the virion. The protein localises to the host cytoplasm. In terms of biological role, plays a role in the inhibition of the host innate immune response. Mechanistically, promotes the autophagy-mediated lysosomal degradation of host TBK1 and affects IRF3 nuclear translocation to block type I IFN production. The polypeptide is Structural protein A137R (Ornithodoros (relapsing fever ticks)).